Consider the following 121-residue polypeptide: Lysozyme (121 aa).

The region spanning 1–121 is the C-type lysozyme domain; the sequence is KTFTRCELVQ…NKPLPDISKC (121 aa). Cystine bridges form between Cys-6-Cys-121, Cys-27-Cys-110, Cys-62-Cys-76, and Cys-72-Cys-90. Residues Glu-32 and Asp-50 contribute to the active site.

It belongs to the glycosyl hydrolase 22 family.

The catalysed reaction is Hydrolysis of (1-&gt;4)-beta-linkages between N-acetylmuramic acid and N-acetyl-D-glucosamine residues in a peptidoglycan and between N-acetyl-D-glucosamine residues in chitodextrins.. Functionally, lysozymes have primarily a bacteriolytic function; those in tissues and body fluids are associated with the monocyte-macrophage system and enhance the activity of immunoagents. This is Lysozyme from Galleria mellonella (Greater wax moth).